Consider the following 236-residue polypeptide: Putative N-acetylmannosamine-6-phosphate 2-epimerase (236 aa).

This sequence belongs to the NanE family.

The enzyme catalyses an N-acyl-D-glucosamine 6-phosphate = an N-acyl-D-mannosamine 6-phosphate. It participates in amino-sugar metabolism; N-acetylneuraminate degradation; D-fructose 6-phosphate from N-acetylneuraminate: step 3/5. In terms of biological role, converts N-acetylmannosamine-6-phosphate (ManNAc-6-P) to N-acetylglucosamine-6-phosphate (GlcNAc-6-P). This Listeria welshimeri serovar 6b (strain ATCC 35897 / DSM 20650 / CCUG 15529 / CIP 8149 / NCTC 11857 / SLCC 5334 / V8) protein is Putative N-acetylmannosamine-6-phosphate 2-epimerase.